The primary structure comprises 146 residues: Envelope protein OPG155 (146 aa).

A helical; Signal-anchor for type II membrane protein membrane pass occupies residues 1–21 (MNSLSIFFIVVATAAVCLLFI). At 22 to 146 (QGYSIYENYG…AECQFLKSVL (125 aa)) the chain is on the virion surface side.

The protein belongs to the orthopoxvirus OPG155 protein family. Part of a stable entry-fusion complex (EFC) which is at least composed of proteins OPG143, OPG147, OPG155, OPG086, OPG094, OPG107, OPG104, and OPG099. Formation of the viral membrane is necessary for the assembly of the complex. Interacts directly with protein OPG107. In terms of processing, contains two intramolecular disulfide bonds. They are created by the viral disulfide bond formation pathway, a poxvirus-specific pathway that operates on the cytoplasmic side of the MV membranes.

Its subcellular location is the virion membrane. In terms of biological role, envelope protein required for virus entry into host cell and for cell-cell fusion (syncytium formation). This Ectromelia virus (strain Moscow) (ECTV) protein is Envelope protein OPG155 (OPG155).